Here is a 130-residue protein sequence, read N- to C-terminus: U-scoloptoxin(17)-Er1a (130 aa).

Positions 1–18 are cleaved as a signal peptide; sequence MKLLVFALFLQVVQLSLA.

Belongs to the scoloptoxin-17 family. Post-translationally, contains 4 disulfide bonds. In terms of tissue distribution, expressed by the venom gland.

Its subcellular location is the secreted. The protein is U-scoloptoxin(17)-Er1a of Ethmostigmus rubripes (Giant centipede).